The chain runs to 147 residues: Mucoricin (147 aa).

Positions 4–143 (EEGRLFFIKS…VSANQRWELV (140 aa)) constitute a Ricin B-type lectin domain.

Belongs to the ribosome-inactivating protein family. Type 1 RIP subfamily.

The protein resides in the secreted. The enzyme catalyses Endohydrolysis of the N-glycosidic bond at one specific adenosine on the 28S rRNA.. Functionally, N-glycosylase that inhibits protein synthesis in the host by depurinating ribosomal rRNA, and thus acts as a ribosomal inactivating protein (RIP). Promotes vascular permeability in the host and induces necrosis and apoptosis of host alveolar epithelial cells. The sequence is that of Mucoricin from Rhizopus delemar (strain RA 99-880 / ATCC MYA-4621 / FGSC 9543 / NRRL 43880) (Mucormycosis agent).